Reading from the N-terminus, the 424-residue chain is Riboflavin biosynthesis protein RibBA (424 aa).

The DHBP synthase stretch occupies residues 1–204 (MTRFDSIERA…IADLIAWRRK (204 aa)). D-ribulose 5-phosphate contacts are provided by residues 28–29 (RE), Asp-33, 141–145 (RPGHT), and Glu-165. Glu-29 provides a ligand contact to Mg(2+). His-144 is a binding site for Mg(2+). The GTP cyclohydrolase II stretch occupies residues 205 to 424 (HEKHVLRIAE…QNTAQPGTAL (220 aa)). Position 259–263 (259–263 (RVHSE)) interacts with GTP. Cys-264, Cys-275, and Cys-277 together coordinate Zn(2+). GTP-binding positions include Gln-280, 303-305 (EGR), and Thr-325. The Proton acceptor; for GTP cyclohydrolase activity role is filled by Asp-337. Arg-339 acts as the Nucleophile; for GTP cyclohydrolase activity in catalysis. The GTP site is built by Thr-360 and Lys-365.

This sequence in the N-terminal section; belongs to the DHBP synthase family. It in the C-terminal section; belongs to the GTP cyclohydrolase II family. Mg(2+) is required as a cofactor. The cofactor is Mn(2+). Zn(2+) serves as cofactor.

It carries out the reaction D-ribulose 5-phosphate = (2S)-2-hydroxy-3-oxobutyl phosphate + formate + H(+). It catalyses the reaction GTP + 4 H2O = 2,5-diamino-6-hydroxy-4-(5-phosphoribosylamino)-pyrimidine + formate + 2 phosphate + 3 H(+). It functions in the pathway cofactor biosynthesis; riboflavin biosynthesis; 2-hydroxy-3-oxobutyl phosphate from D-ribulose 5-phosphate: step 1/1. The protein operates within cofactor biosynthesis; riboflavin biosynthesis; 5-amino-6-(D-ribitylamino)uracil from GTP: step 1/4. In terms of biological role, catalyzes the conversion of D-ribulose 5-phosphate to formate and 3,4-dihydroxy-2-butanone 4-phosphate. Its function is as follows. Catalyzes the conversion of GTP to 2,5-diamino-6-ribosylamino-4(3H)-pyrimidinone 5'-phosphate (DARP), formate and pyrophosphate. This chain is Riboflavin biosynthesis protein RibBA, found in Rhodococcus erythropolis (strain PR4 / NBRC 100887).